The chain runs to 359 residues: 3-dehydroquinate synthase (359 aa).

Residues 71–76 (DGEAYK), 105–109 (GVIGD), 129–130 (TT), Lys-142, Lys-151, and 169–172 (TLGT) each bind NAD(+). Positions 184, 247, and 264 each coordinate Zn(2+).

It belongs to the sugar phosphate cyclases superfamily. Dehydroquinate synthase family. Co(2+) is required as a cofactor. The cofactor is Zn(2+). It depends on NAD(+) as a cofactor.

Its subcellular location is the cytoplasm. The catalysed reaction is 7-phospho-2-dehydro-3-deoxy-D-arabino-heptonate = 3-dehydroquinate + phosphate. It participates in metabolic intermediate biosynthesis; chorismate biosynthesis; chorismate from D-erythrose 4-phosphate and phosphoenolpyruvate: step 2/7. In terms of biological role, catalyzes the conversion of 3-deoxy-D-arabino-heptulosonate 7-phosphate (DAHP) to dehydroquinate (DHQ). The chain is 3-dehydroquinate synthase from Thiobacillus denitrificans (strain ATCC 25259 / T1).